Consider the following 215-residue polypeptide: Leucyl/phenylalanyl-tRNA--protein transferase (215 aa).

It belongs to the L/F-transferase family.

The protein resides in the cytoplasm. It catalyses the reaction N-terminal L-lysyl-[protein] + L-leucyl-tRNA(Leu) = N-terminal L-leucyl-L-lysyl-[protein] + tRNA(Leu) + H(+). It carries out the reaction N-terminal L-arginyl-[protein] + L-leucyl-tRNA(Leu) = N-terminal L-leucyl-L-arginyl-[protein] + tRNA(Leu) + H(+). The catalysed reaction is L-phenylalanyl-tRNA(Phe) + an N-terminal L-alpha-aminoacyl-[protein] = an N-terminal L-phenylalanyl-L-alpha-aminoacyl-[protein] + tRNA(Phe). Functions in the N-end rule pathway of protein degradation where it conjugates Leu, Phe and, less efficiently, Met from aminoacyl-tRNAs to the N-termini of proteins containing an N-terminal arginine or lysine. This Campylobacter jejuni subsp. doylei (strain ATCC BAA-1458 / RM4099 / 269.97) protein is Leucyl/phenylalanyl-tRNA--protein transferase.